We begin with the raw amino-acid sequence, 281 residues long: Probable superoxide dismutase [Fe] (281 aa).

Histidine 104, histidine 152, aspartate 236, and histidine 240 together coordinate Fe cation.

This sequence belongs to the iron/manganese superoxide dismutase family. Fe cation serves as cofactor.

It catalyses the reaction 2 superoxide + 2 H(+) = H2O2 + O2. Destroys superoxide anion radicals which are normally produced within the cells and which are toxic to biological systems. This is Probable superoxide dismutase [Fe] (sodF) from Bacillus subtilis (strain 168).